The sequence spans 169 residues: Endoribonuclease YbeY (169 aa).

3 residues coordinate Zn(2+): His-117, His-121, and His-127.

This sequence belongs to the endoribonuclease YbeY family. Zn(2+) is required as a cofactor.

It is found in the cytoplasm. Functionally, single strand-specific metallo-endoribonuclease involved in late-stage 70S ribosome quality control and in maturation of the 3' terminus of the 16S rRNA. The polypeptide is Endoribonuclease YbeY (Mesoplasma florum (strain ATCC 33453 / NBRC 100688 / NCTC 11704 / L1) (Acholeplasma florum)).